The following is a 375-amino-acid chain: Succinyl-diaminopimelate desuccinylase (375 aa).

His-66 is a Zn(2+) binding site. Asp-68 is a catalytic residue. Residue Asp-99 participates in Zn(2+) binding. The active-site Proton acceptor is the Glu-133. The Zn(2+) site is built by Glu-134, Glu-162, and His-348.

Belongs to the peptidase M20A family. DapE subfamily. Homodimer. Zn(2+) serves as cofactor. Co(2+) is required as a cofactor.

It catalyses the reaction N-succinyl-(2S,6S)-2,6-diaminopimelate + H2O = (2S,6S)-2,6-diaminopimelate + succinate. It functions in the pathway amino-acid biosynthesis; L-lysine biosynthesis via DAP pathway; LL-2,6-diaminopimelate from (S)-tetrahydrodipicolinate (succinylase route): step 3/3. In terms of biological role, catalyzes the hydrolysis of N-succinyl-L,L-diaminopimelic acid (SDAP), forming succinate and LL-2,6-diaminopimelate (DAP), an intermediate involved in the bacterial biosynthesis of lysine and meso-diaminopimelic acid, an essential component of bacterial cell walls. The chain is Succinyl-diaminopimelate desuccinylase from Escherichia coli O7:K1 (strain IAI39 / ExPEC).